The primary structure comprises 151 residues: uncharacterized protein (151 aa).

This is an uncharacterized protein from Rhodobacter capsulatus (Rhodopseudomonas capsulata).